We begin with the raw amino-acid sequence, 233 residues long: Lysoplasmalogenase TMEM86B (233 aa).

The Cytoplasmic portion of the chain corresponds to 1-30; sequence MPCCDPYPWIGLNVGRLSSFPLLKYPQVRR. Residues 31 to 47 traverse the membrane as a helical segment; sequence WLAPFIVACSLYFLLWI. Residues 48–53 are Extracellular-facing; the sequence is PEDQPS. A helical transmembrane segment spans residues 54–75; the sequence is WVSALVKCQPILCLVLFLWAVA. Residues 76–81 are Cytoplasmic-facing; it reads PGGSYT. Residues 82–100 form a helical membrane-spanning segment; it reads WLLQGALTCSAVGDACLIW. The Extracellular portion of the chain corresponds to 101 to 106; that stretch reads PEAFFY. Residues 107–124 form a helical membrane-spanning segment; that stretch reads GMAVFSVAHLLYLWAFGL. Residues 125–130 lie on the Cytoplasmic side of the membrane; that stretch reads SPLQPG. The chain crosses the membrane as a helical span at residues 131–147; sequence LLLCTTLASLTYYSFLL. Topologically, residues 148–153 are extracellular; sequence LHLEPN. A helical membrane pass occupies residues 154-170; that stretch reads MVLPVAAYGLILNTMLW. The Cytoplasmic segment spans residues 171 to 178; that stretch reads RGLVLGRS. Residues 179–195 form a helical membrane-spanning segment; the sequence is AGWGAVLFIFSDGVLAW. Residues 196–206 lie on the Extracellular side of the membrane; that stretch reads DTFVYTLPFAR. The chain crosses the membrane as a helical span at residues 207 to 225; it reads LVTMSTYYAAQLLLTLSAL. Residues 226 to 233 lie on the Cytoplasmic side of the membrane; sequence RSPGLKTH.

This sequence belongs to the TMEM86 family. Homodimer.

The protein localises to the endoplasmic reticulum membrane. The protein resides in the cytoplasm. The catalysed reaction is a 1-O-(1Z-alkenyl)-sn-glycero-3-phosphocholine + H2O = a 2,3-saturated aldehyde + sn-glycerol 3-phosphocholine. The enzyme catalyses a 1-O-(1Z-alkenyl)-sn-glycero-3-phosphoethanolamine + H2O = a 2,3-saturated aldehyde + sn-glycero-3-phosphoethanolamine. With respect to regulation, competitively inhibited by lysophosphatidic acid. Functionally, catalyzes the hydrolysis of the vinyl ether bond of choline or ethanolamine lysoplasmalogens, forming fatty aldehyde and glycerophosphocholine or glycerophosphoethanolamine, respectively and is specific for the sn-2-deacylated (lyso) form of plasmalogen. The polypeptide is Lysoplasmalogenase TMEM86B (Tmem86b) (Rattus norvegicus (Rat)).